The chain runs to 307 residues: ATP synthase gamma chain (307 aa).

This sequence belongs to the ATPase gamma chain family. F-type ATPases have 2 components, CF(1) - the catalytic core - and CF(0) - the membrane proton channel. CF(1) has five subunits: alpha(3), beta(3), gamma(1), delta(1), epsilon(1). CF(0) has three main subunits: a, b and c.

The protein resides in the cell membrane. Its function is as follows. Produces ATP from ADP in the presence of a proton gradient across the membrane. The gamma chain is believed to be important in regulating ATPase activity and the flow of protons through the CF(0) complex. The protein is ATP synthase gamma chain of Bifidobacterium longum (strain DJO10A).